The sequence spans 307 residues: MSYTVVALGGNALLRGGEGSIQDQRDTIEQTVPHFVDLYERGHELVFTHGNGPQVGQLLLQNEEAESAAEKPLDVLGAESQAQIGYLLQQQLREELGETPATVITQTIVDEDDPAFDDPTKRIGPFYDEDEASEKDFPVKEGTDGDGNVGYRRVVPSPKPVDIVEAEHIKTLVETGKPVISSGGGGVPVVEDGDSLTGVAAVIDKDRAAQSLATDIGADEFLVLTDVDAVYRNFGTEDEEELSELTTEEAADMLAAGEFGEGSMAPKVEACIEFVESGGDRAIITKPETATEALDGAAGTTVVPADE.

It belongs to the carbamate kinase family.

It is found in the cytoplasm. It catalyses the reaction hydrogencarbonate + NH4(+) + ATP = carbamoyl phosphate + ADP + H2O + H(+). It participates in metabolic intermediate metabolism; carbamoyl phosphate degradation; CO(2) and NH(3) from carbamoyl phosphate: step 1/1. In terms of biological role, carbamate kinase involved in the arginine deiminase pathway of fermentative arginine utilization. The chain is Carbamate kinase (arcC) from Halobacterium salinarum (strain ATCC 700922 / JCM 11081 / NRC-1) (Halobacterium halobium).